Consider the following 305-residue polypeptide: Cytochrome c biogenesis protein CcsA (305 aa).

8 helical membrane-spanning segments follow: residues 11–31 (GLGF…FWAV), 37–57 (TGIV…QLVL), 63–83 (GHFP…ACTL), 96–116 (IVAA…SFAL), 141–161 (VIMV…AVLL), 212–232 (TITV…VWAN), 246–263 (TWAL…HTRL), and 275–295 (VAVV…LLGI).

This sequence belongs to the CcmF/CycK/Ccl1/NrfE/CcsA family. May interact with ccs1.

It is found in the cellular thylakoid membrane. Its function is as follows. Required during biogenesis of c-type cytochromes (cytochrome c6 and cytochrome f) at the step of heme attachment. This is Cytochrome c biogenesis protein CcsA from Parasynechococcus marenigrum (strain WH8102).